A 443-amino-acid chain; its full sequence is Glutamyl-tRNA reductase (443 aa).

Substrate is bound by residues 49-52, serine 109, 114-116, and glutamine 120; these read TCNR and ETQ. Cysteine 50 functions as the Nucleophile in the catalytic mechanism. 189 to 194 serves as a coordination point for NADP(+); that stretch reads GAGKMS.

Belongs to the glutamyl-tRNA reductase family. In terms of assembly, homodimer.

It carries out the reaction (S)-4-amino-5-oxopentanoate + tRNA(Glu) + NADP(+) = L-glutamyl-tRNA(Glu) + NADPH + H(+). The protein operates within porphyrin-containing compound metabolism; protoporphyrin-IX biosynthesis; 5-aminolevulinate from L-glutamyl-tRNA(Glu): step 1/2. Its function is as follows. Catalyzes the NADPH-dependent reduction of glutamyl-tRNA(Glu) to glutamate 1-semialdehyde (GSA). This chain is Glutamyl-tRNA reductase, found in Heliobacterium mobile (Heliobacillus mobilis).